An 804-amino-acid chain; its full sequence is SH3-containing GRB2-like protein 3-interacting protein 1 (804 aa).

3 disordered regions span residues 1 to 90, 124 to 181, and 199 to 254; these read MMEG…EESH, LSPS…GPPL, and IWGS…QSAT. The span at 16-34 shows a compositional bias: basic and acidic residues; that stretch reads RKKEKDTDSTGSPDRDGIK. Serine 54, serine 80, serine 81, serine 83, serine 125, serine 127, serine 132, and serine 145 each carry phosphoserine. Residues threonine 156 and threonine 158 each carry the phosphothreonine modification. Residue serine 212 is modified to Phosphoserine. Positions 221–236 are enriched in pro residues; it reads TGTPPPLPPKNVPATP. Threonine 223 and threonine 235 each carry phosphothreonine. 5 positions are modified to phosphoserine: serine 241, serine 263, serine 276, serine 292, and serine 295. Residues 289-309 are compositionally biased toward basic and acidic residues; that stretch reads VHFSDTSPEHVTPELTPREKV. Positions 289–500 are disordered; sequence VHFSDTSPEH…LSAATTPTVE (212 aa). Phosphothreonine is present on residues threonine 300 and threonine 304. Pro residues predominate over residues 322-346; that stretch reads SPAPGPLGPPGPTGPPGPPGPPRNV. Serine 348 carries the phosphoserine modification. Residues 354-369 are compositionally biased toward basic and acidic residues; it reads EVQKKVAEQTFIKDDY. At serine 375 the chain carries Phosphoserine. Residue threonine 386 is modified to Phosphothreonine. Residues 413–432 are compositionally biased toward low complexity; the sequence is TSGASSPARPATPLLPCSST. Residues 433 to 451 show a composition bias toward pro residues; sequence TPPPPPPRPPSRPKLPPGK. 2 stretches are compositionally biased toward low complexity: residues 458-468 and 475-498; these read SRPFSPPIHSS and PLAR…TTPT. A Phosphoserine modification is found at serine 462. The MHD domain maps to 535–803; the sequence is TLPVAAAFTE…RFAAGKYLAD (269 aa). 4 interaction with DPF motifs-containing proteins regions span residues 537 to 543, 569 to 571, 643 to 646, and 789 to 794; these read PVAAAFT, SFP, TYYN, and SLIKKR. The tract at residues 625–804 is necessary and sufficient to mediate interaction with CANX; that stretch reads MPNLMTHLKK…FAAGKYLADN (180 aa).

As to quaternary structure, interacts with proteins essential or regulating the formation of functional clathrin-coated pits. Interacts with CANX. Interacts with AP2A1. Interacts with EPS15. Interacts with SH3GL3. Interacts with AMPH. Interacts with ITSN1 (via SH3 domains). Interacts with and REPS1.

The protein resides in the membrane. The protein localises to the clathrin-coated pit. Functionally, may function in clathrin-mediated endocytosis. Has both a membrane binding/tubulating activity and the ability to recruit proteins essential to the formation of functional clathrin-coated pits. Has a preference for membranes enriched in phosphatidylserine and phosphoinositides and is required for the endocytosis of the transferrin receptor. May also bind tubulin. May play a role in the regulation of energy homeostasis. This is SH3-containing GRB2-like protein 3-interacting protein 1 (SGIP1) from Pongo abelii (Sumatran orangutan).